The primary structure comprises 937 residues: AP-2 complex subunit beta (937 aa).

An N-acetylthreonine modification is found at threonine 2. Serine 4 is subject to Phosphoserine. Lysine 265 is modified (N6-acetyllysine). A phosphotyrosine mark is found at tyrosine 737 and tyrosine 928.

Belongs to the adaptor complexes large subunit family. As to quaternary structure, adapter protein complex 2 (AP-2) is a heterotetramer composed of two large adaptins (alpha-type subunit AP2A1 or AP2A2 and beta-type subunit AP2B1), a medium adaptin (mu-type subunit AP2M1) and a small adaptin (sigma-type subunit AP2S1). Interacts with EPN1. Interacts with EPS15; clathrin competes with EPS15. Interacts with SNAP91; clathrin competes with SNAP91. Interacts with CLTC; clathrin competes with EPS15, SNAP91 and PIP5K1C. Interacts with LDLRAP1. Interacts with AMPH and BIN1. Interacts with ARF6 (GDP-bound). Interacts (dephosphorylated at Tyr-737) with ARRB1; phosphorylation of AP2B1 at Tyr-737 disrupts the interaction. Interacts with SLC2A8. Interacts with SCYL1 and SCYL2. Interacts with TGFBR1 and TGFBR2. Interacts with PIP5K1C; clathrin competes with PIP5K1C. Interacts with DENND1B. Interacts with FCHO1. Interacts with RFTN1. Interacts with KIAA1107. Together with AP2A1 or AP2A2 and AP2M1, it interacts with ADAM10; this interaction facilitates ADAM10 endocytosis from the plasma membrane during long-term potentiation in hippocampal neurons. The N-terminus is blocked. Post-translationally, phosphorylation at Tyr-737 by SRC occurs at the plasma membrane in clathrin-coated vesicles (CCVs).

The protein resides in the cell membrane. Its subcellular location is the membrane. It is found in the coated pit. Component of the adaptor protein complex 2 (AP-2). Adaptor protein complexes function in protein transport via transport vesicles in different membrane traffic pathways. Adaptor protein complexes are vesicle coat components and appear to be involved in cargo selection and vesicle formation. AP-2 is involved in clathrin-dependent endocytosis in which cargo proteins are incorporated into vesicles surrounded by clathrin (clathrin-coated vesicles, CCVs) which are destined for fusion with the early endosome. The clathrin lattice serves as a mechanical scaffold but is itself unable to bind directly to membrane components. Clathrin-associated adaptor protein (AP) complexes which can bind directly to both the clathrin lattice and to the lipid and protein components of membranes are considered to be the major clathrin adaptors contributing the CCV formation. AP-2 also serves as a cargo receptor to selectively sort the membrane proteins involved in receptor-mediated endocytosis. AP-2 seems to play a role in the recycling of synaptic vesicle membranes from the presynaptic surface. AP-2 recognizes Y-X-X-[FILMV] (Y-X-X-Phi) and [ED]-X-X-X-L-[LI] endocytosis signal motifs within the cytosolic tails of transmembrane cargo molecules. AP-2 may also play a role in maintaining normal post-endocytic trafficking through the ARF6-regulated, non-clathrin pathway. During long-term potentiation in hippocampal neurons, AP-2 is responsible for the endocytosis of ADAM10. The AP-2 beta subunit acts via its C-terminal appendage domain as a scaffolding platform for endocytic accessory proteins; at least some clathrin-associated sorting proteins (CLASPs) are recognized by their [DE]-X(1,2)-F-X-X-[FL]-X-X-X-R motif. The AP-2 beta subunit binds to clathrin heavy chain, promoting clathrin lattice assembly; clathrin displaces at least some CLASPs from AP2B1 which probably then can be positioned for further coat assembly. This Bos taurus (Bovine) protein is AP-2 complex subunit beta (AP2B1).